We begin with the raw amino-acid sequence, 787 residues long: Bifunctional dethiobiotin synthetase/adenosylmethionine-8-amino-7-oxononanoate aminotransferase (787 aa).

ATP is bound at residue 23 to 28; that stretch reads DVGKTI. Thr27 lines the Mg(2+) pocket. Thr54 contributes to the substrate binding site. Mg(2+) is bound by residues Asp61 and Glu123. ATP is bound by residues 123–126 and 184–185; these read ETAG and KD. Residue 323-324 coordinates (8S)-8-amino-7-oxononanoate; sequence WW. Residue 384–385 participates in pyridoxal 5'-phosphate binding; it reads GS. Position 421 (Tyr421) interacts with (8S)-8-amino-7-oxononanoate. Position 582 (Asp582) interacts with pyridoxal 5'-phosphate. (8S)-8-amino-7-oxononanoate contacts are provided by Lys611 and Gly645. 646-647 contributes to the pyridoxal 5'-phosphate binding site; the sequence is HS. Arg756 serves as a coordination point for (8S)-8-amino-7-oxononanoate.

It in the N-terminal section; belongs to the dethiobiotin synthetase family. This sequence in the C-terminal section; belongs to the class-III pyridoxal-phosphate-dependent aminotransferase family. BioA subfamily. In terms of assembly, homodimer. It depends on Mg(2+) as a cofactor. Pyridoxal 5'-phosphate is required as a cofactor.

It localises to the mitochondrion matrix. It catalyses the reaction (7R,8S)-7,8-diammoniononanoate + CO2 + ATP = (4R,5S)-dethiobiotin + ADP + phosphate + 3 H(+). It carries out the reaction (8S)-8-amino-7-oxononanoate + S-adenosyl-L-methionine = S-adenosyl-4-methylsulfanyl-2-oxobutanoate + (7R,8S)-7,8-diammoniononanoate. Its pathway is cofactor biosynthesis; biotin biosynthesis; biotin from 7,8-diaminononanoate: step 1/2. It participates in cofactor biosynthesis; biotin biosynthesis; 7,8-diaminononanoate from 8-amino-7-oxononanoate (SAM route): step 1/1. Functionally, bifunctional enzyme; part of the cluster involved in the biosynthesis of biotin (also known as vitamin B8 or vitamin H), a water-soluble vitamin that functions as a prosthetic group of many carboxylases, such as acetyl-CoA carboxylase and pyruvate carboxylase. Catalyzes a mechanistically unusual reaction, the ATP-dependent insertion of CO2 between the N7 and N8 nitrogen atoms of 7,8-diaminopelargonic acid (DAPA) to form an ureido ring. Also catalyzes the transfer of the alpha-amino group from S-adenosyl-L-methionine (SAM) to 7-keto-8-aminopelargonic acid (KAPA) to form 7,8-diaminopelargonic acid (DAPA). It is the only animotransferase known to utilize SAM as an amino donor. The sequence is that of Bifunctional dethiobiotin synthetase/adenosylmethionine-8-amino-7-oxononanoate aminotransferase from Emericella nidulans (strain FGSC A4 / ATCC 38163 / CBS 112.46 / NRRL 194 / M139) (Aspergillus nidulans).